Consider the following 1087-residue polypeptide: Voltage-gated inwardly rectifying potassium channel KCNH3 (1087 aa).

Topologically, residues 1 to 228 (MPAMRGLLAP…HCGALRATWD (228 aa)) are cytoplasmic. One can recognise a PAS domain in the interval 18 to 90 (IATRFDGTHS…QQIRKALDEH (73 aa)). Residues 93-145 (FKAELILYRKSGLPFWCLLDVIPIKNEKGEVALFLVSHKDISETKNRGGPDNW) form the PAC domain. The span at 137-150 (KNRGGPDNWKERGG) shows a compositional bias: basic and acidic residues. The disordered stretch occupies residues 137–161 (KNRGGPDNWKERGGGRRRYGRAGSK). Residues 229 to 249 (GFILLATLYVAVTVPYSVCVS) traverse the membrane as a helical segment. Over 250–259 (TAREPSAARG) the chain is Extracellular. A helical transmembrane segment spans residues 260-280 (PPSVCDLAVEVLFILDIVLNF). Over 281 to 302 (RTTFVSKSGQVVFAPKSICLHY) the chain is Cytoplasmic. A helical transmembrane segment spans residues 303–323 (VTTWFLLDVIAALPFDLLHAF). The Extracellular portion of the chain corresponds to 324–331 (KVNVYVGA). The chain crosses the membrane as a helical; Voltage-sensor span at residues 332-352 (HLLKTVRLLRLLRLLPRLDRY). Topologically, residues 353 to 361 (SQYSAVVLT) are cytoplasmic. Residues 362–382 (LLMAVFALLAHWVACVWFYIG) form a helical membrane-spanning segment. At 383–456 (QQEIENSESE…GGPSLRSAYI (74 aa)) the chain is on the extracellular side. The tract at residues 416 to 436 (SPDGGNSSGQSENCSSSGGGS) is disordered. Residues 419–431 (GGNSSGQSENCSS) are compositionally biased toward low complexity. Residues Asn-421, Asn-428, and Asn-439 are each glycosylated (N-linked (GlcNAc...) asparagine). The pore-forming intramembrane region spans 457–477 (TSLYFALSSLTSVGFGNVSAN). The Selectivity filter signature appears at 468–473 (SVGFGN). Residues 478 to 482 (TDTEK) are Extracellular-facing. Residues 483–503 (IFSICTMLIGALMHAVVFGNV) form a helical membrane-spanning segment. Over 504–1087 (TAIIQRMYAR…QWTQEEGTGV (584 aa)) the chain is Cytoplasmic. 585–700 (LFEAASRGCL…FAPRFSRGLR (116 aa)) contacts a nucleoside 3',5'-cyclic phosphate. 2 disordered regions span residues 733-813 (EKET…LQLP) and 975-1061 (LMAP…PWDP). A compositionally biased stretch (basic residues) spans 776-788 (TAPRPRLGGRGRP).

It belongs to the potassium channel family. H (Eag) (TC 1.A.1.20) subfamily. Kv12.2/KCNH3 sub-subfamily. In terms of assembly, the potassium channel is probably composed of a homo- or heterotetrameric complex of pore-forming alpha subunits that can associate with modulating beta subunits. Interacts with KCNE1 and KCNE3; these interactions regulate KCNH3 trafficking to the plasma membrane and its subsequent voltage-gated potassium channel activity. N-glycosylated. N-glycosylation mediates traffick to the cell membrane but is not necessary for voltage-gated potassium channel activity. As to expression, highly expressed in adult and embryonic brain, in particular in cerebellum, brain stem, hippocampus, cortex and striatum. Also found in pituitary.

The protein localises to the cell membrane. It catalyses the reaction K(+)(in) = K(+)(out). Functionally, pore-forming (alpha) subunit of a voltage-gated inwardly rectifying potassium channel. Charactherized by a fast rate of activation during depolarization followed by a rapid inactivation at much more depolarized value causing inward rectification due to a C-type inactivation mechanism. Exhibits a rapid recovery from inactivation. The polypeptide is Voltage-gated inwardly rectifying potassium channel KCNH3 (Rattus norvegicus (Rat)).